Here is a 229-residue protein sequence, read N- to C-terminus: UPF0173 metal-dependent hydrolase RD1_1994 (229 aa).

Belongs to the UPF0173 family.

This chain is UPF0173 metal-dependent hydrolase RD1_1994, found in Roseobacter denitrificans (strain ATCC 33942 / OCh 114) (Erythrobacter sp. (strain OCh 114)).